Here is a 399-residue protein sequence, read N- to C-terminus: RNA-binding protein cabeza (399 aa).

The segment covering 1 to 12 (MERGGYGGGSGQ) has biased composition (gly residues). A disordered region spans residues 1–82 (MERGGYGGGS…RGGNSYGNGG (82 aa)). The span at 24-34 (YQQMPNKTGNY) shows a compositional bias: polar residues. The span at 43–69 (KQGGGYDSGSGHRGSGGSGNGGGGGGS) shows a compositional bias: gly residues. Residues 120–206 (DTIFVSGMDP…NAIKVSLAQR (87 aa)) enclose the RRM domain. 2 disordered regions span residues 209–276 (NWNK…QPRD) and 300–399 (TPKG…SRPY). The segment covering 212–271 (KGGGGGGGGGGRGGFGGRRGGGGGGGGGGGGGGRFDRGGGGGGGRYDRGGGGGGGGGGGN) has biased composition (gly residues). The RanBP2-type zinc finger occupies 275–304 (RDGDWKCNSCNNTNFAWRNECNRCKTPKGD). Gly residues-rich tracts occupy residues 308–339 (SSGGGGGGGYGGGGGGGGYDRGNDRGSGGGGY), 347–361 (NSQGGGGGGGGGGGY), and 368–380 (NGGGRGGRGGGGG). Over residues 387–399 (PMRNDGGMRSRPY) the composition is skewed to low complexity.

This sequence belongs to the RRM TET family. As to expression, ubiquitous. Enriched in the brain and central nervous system during embryogenesis. Enriched in the adult head. Embryos contain both isoforms A and B, whereas later in development (heads and torsos) only isoform B is detected.

Its subcellular location is the nucleus. In terms of biological role, may participate in a function common to the expression of most genes transcribed by RNA polymerase II. This is RNA-binding protein cabeza (caz) from Drosophila melanogaster (Fruit fly).